The sequence spans 461 residues: L-seryl-tRNA(Sec) selenium transferase (461 aa).

Lysine 294 is subject to N6-(pyridoxal phosphate)lysine.

It belongs to the SelA family. Pyridoxal 5'-phosphate serves as cofactor.

The protein localises to the cytoplasm. It catalyses the reaction L-seryl-tRNA(Sec) + selenophosphate + H(+) = L-selenocysteinyl-tRNA(Sec) + phosphate. The protein operates within aminoacyl-tRNA biosynthesis; selenocysteinyl-tRNA(Sec) biosynthesis; selenocysteinyl-tRNA(Sec) from L-seryl-tRNA(Sec) (bacterial route): step 1/1. Functionally, converts seryl-tRNA(Sec) to selenocysteinyl-tRNA(Sec) required for selenoprotein biosynthesis. In Haemophilus influenzae (strain 86-028NP), this protein is L-seryl-tRNA(Sec) selenium transferase.